The chain runs to 399 residues: uncharacterized protein (399 aa).

Residues 1-8 (MHNLQVRR) are Cytoplasmic-facing. The chain crosses the membrane as a helical span at residues 9 to 35 (HYAALKGFYLFAFLGTGSIIPLLSMYL). Over 36 to 42 (TKEQHLS) the chain is Extracellular. The helical transmembrane segment at 43–71 (GSQVGLIMSLGPIVMIFFQPFWGMLSDYT) threads the bilayer. The Cytoplasmic portion of the chain corresponds to 72-75 (QKTK). A helical membrane pass occupies residues 76–101 (GLLAVCTSITGIIGLAYIAFDSFPLF). The Extracellular segment spans residues 102-105 (ILIA). Residues 106 to 123 (ACFAAFQSTIIPLSDSIS) form a helical membrane-spanning segment. The Cytoplasmic portion of the chain corresponds to 124–134 (LRYTQETNGNY). Residues 135–157 (GGIRLFGSLGFGVAVFAMGQVTN) traverse the membrane as a helical segment. The Extracellular segment spans residues 158–160 (QLY). A helical membrane pass occupies residues 161-180 (PIHVIFIFGCAFLCIAAILA). Residues 181–210 (SQVPGQQKTTKVNIRKGFRELISNKTFLIF) lie on the Cytoplasmic side of the membrane. A helical membrane pass occupies residues 211–230 (MIITFTTFAPNLANNTYFSL). Topologically, residues 231–234 (FLDK) are extracellular. The helical transmembrane segment at 235–259 (SGASLSAIGILFFIGVISEIPFMRF) threads the bilayer. Residues 260–269 (AQTFIDKMGL) are Cytoplasmic-facing. The chain crosses the membrane as a helical span at residues 270–289 (LNVIMLSGGVSLFRWALYFT). The Extracellular segment spans residues 290–292 (APS). The chain crosses the membrane as a helical span at residues 293–315 (LWIIYATVFLQGVAIGLFIPAAL). At 316 to 327 (QYVKKITPRHVE) the chain is on the cytoplasmic side. The chain crosses the membrane as a helical span at residues 328–355 (ATALTMYAAIGNGFGNWFCTFAGGYIFD). At 356–358 (YVS) the chain is on the extracellular side. Residues 359–379 (IFAVYLLFGILSIAGFGLTLY) form a helical membrane-spanning segment. The Cytoplasmic segment spans residues 380-399 (LMKAEKNKHTLHQPAVTFKP).

The protein belongs to the major facilitator superfamily.

The protein resides in the cell membrane. This is an uncharacterized protein from Bacillus subtilis (strain 168).